Reading from the N-terminus, the 990-residue chain is Translation initiation factor IF-2 (990 aa).

The disordered stretch occupies residues 92–402 (KKRTFVKRDD…QRDEHLQAAP (311 aa)). Composition is skewed to low complexity over residues 104–116 (EGAADGAGSAAFA) and 131–151 (EAPAEQAQADAAPAADGAAPA). Residues 158 to 201 (ELARREEQARHQAELIRRQEAELAAKRAAREAREKREREAEERA) are compositionally biased toward basic and acidic residues. Positions 223-243 (TREQAAEATARNAAQLQARAK) are enriched in low complexity. A compositionally biased stretch (basic and acidic residues) spans 244–264 (AAAESKARSDEEAARAADLDA). 2 stretches are compositionally biased toward low complexity: residues 281–290 (ATPKKAVMVA) and 318–342 (PAVGATRTAAGAARAGAAAGAPGAG). Composition is skewed to basic and acidic residues over residues 358 to 368 (PAKKKEIKTRG) and 386 to 398 (RRGDSRDQRDEHL). A tr-type G domain is found at 490-659 (PRAPVVTVMG…LLQADVMELK (170 aa)). Residues 499–506 (GHVDHGKT) form a G1 region. 499–506 (GHVDHGKT) provides a ligand contact to GTP. The interval 524 to 528 (GITQH) is G2. Positions 545–548 (DTPG) are G3. GTP contacts are provided by residues 545–549 (DTPGH) and 599–602 (TKAD). Residues 599–602 (TKAD) are G4. Residues 635–637 (SSK) are G5.

The protein belongs to the TRAFAC class translation factor GTPase superfamily. Classic translation factor GTPase family. IF-2 subfamily.

The protein localises to the cytoplasm. One of the essential components for the initiation of protein synthesis. Protects formylmethionyl-tRNA from spontaneous hydrolysis and promotes its binding to the 30S ribosomal subunits. Also involved in the hydrolysis of GTP during the formation of the 70S ribosomal complex. In Verminephrobacter eiseniae (strain EF01-2), this protein is Translation initiation factor IF-2.